Here is a 929-residue protein sequence, read N- to C-terminus: Valine--tRNA ligase (929 aa).

A 'HIGH' region motif is present at residues 40-50 (PNVTGHLHMGH). Residues 522–526 (KMSKS) carry the 'KMSKS' region motif. Lys525 serves as a coordination point for ATP. A coiled-coil region spans residues 855 to 926 (LAGLIDKEAE…LEQQHAEITD (72 aa)).

It belongs to the class-I aminoacyl-tRNA synthetase family. ValS type 1 subfamily. Monomer.

It is found in the cytoplasm. It catalyses the reaction tRNA(Val) + L-valine + ATP = L-valyl-tRNA(Val) + AMP + diphosphate. Its function is as follows. Catalyzes the attachment of valine to tRNA(Val). As ValRS can inadvertently accommodate and process structurally similar amino acids such as threonine, to avoid such errors, it has a 'posttransfer' editing activity that hydrolyzes mischarged Thr-tRNA(Val) in a tRNA-dependent manner. The sequence is that of Valine--tRNA ligase from Nitrosococcus oceani (strain ATCC 19707 / BCRC 17464 / JCM 30415 / NCIMB 11848 / C-107).